The following is a 264-amino-acid chain: tRNA (guanine-N(1)-)-methyltransferase (264 aa).

S-adenosyl-L-methionine-binding positions include G133 and 152 to 157; that span reads LGDFVM. A compositionally biased stretch (basic and acidic residues) spans 240–251; sequence QRRPDLWRKARG. The interval 240 to 264 is disordered; that stretch reads QRRPDLWRKARGGEPPADESGEVRR. A compositionally biased stretch (acidic residues) spans 255–264; the sequence is PADESGEVRR.

The protein belongs to the RNA methyltransferase TrmD family. In terms of assembly, homodimer.

The protein localises to the cytoplasm. It catalyses the reaction guanosine(37) in tRNA + S-adenosyl-L-methionine = N(1)-methylguanosine(37) in tRNA + S-adenosyl-L-homocysteine + H(+). Functionally, specifically methylates guanosine-37 in various tRNAs. This chain is tRNA (guanine-N(1)-)-methyltransferase, found in Sorangium cellulosum (strain So ce56) (Polyangium cellulosum (strain So ce56)).